The following is a 188-amino-acid chain: Elongation factor P (188 aa).

The protein belongs to the elongation factor P family.

It is found in the cytoplasm. It functions in the pathway protein biosynthesis; polypeptide chain elongation. Its function is as follows. Involved in peptide bond synthesis. Stimulates efficient translation and peptide-bond synthesis on native or reconstituted 70S ribosomes in vitro. Probably functions indirectly by altering the affinity of the ribosome for aminoacyl-tRNA, thus increasing their reactivity as acceptors for peptidyl transferase. The chain is Elongation factor P from Methylobacterium sp. (strain 4-46).